The chain runs to 133 residues: MAKEYSRTQRIGDQMQRELAQLIRREVKDPRVGLVTITAVEVSRDVGHAKIFITVMGQENAEQIAQSIKVLNSAAGFLRMQLAKEMKLRSVPQLHFHYDESVARGAHLSALIERAVAEDSQHGDAPAPEDAKE.

The protein belongs to the RbfA family. As to quaternary structure, monomer. Binds 30S ribosomal subunits, but not 50S ribosomal subunits or 70S ribosomes.

The protein resides in the cytoplasm. Its function is as follows. One of several proteins that assist in the late maturation steps of the functional core of the 30S ribosomal subunit. Associates with free 30S ribosomal subunits (but not with 30S subunits that are part of 70S ribosomes or polysomes). Required for efficient processing of 16S rRNA. May interact with the 5'-terminal helix region of 16S rRNA. The protein is Ribosome-binding factor A of Pseudomonas fluorescens (strain ATCC BAA-477 / NRRL B-23932 / Pf-5).